The sequence spans 236 residues: Snake venom serine protease pallase (236 aa).

The region spanning 1 to 227 (VIGGDECNIN…HLDWIENIIA (227 aa)) is the Peptidase S1 domain. Cystine bridges form between Cys-7–Cys-139, Cys-26–Cys-42, Cys-74–Cys-234, Cys-118–Cys-188, Cys-150–Cys-167, and Cys-178–Cys-203. Active-site charge relay system residues include His-41 and Asp-86. The Charge relay system role is filled by Ser-182.

This sequence belongs to the peptidase S1 family. Snake venom subfamily. Monomer. Expressed by the venom gland.

The protein resides in the secreted. Its function is as follows. Snake venom serine protease that may act in the hemostasis system of the prey. This Gloydius halys (Chinese water mocassin) protein is Snake venom serine protease pallase.